A 525-amino-acid polypeptide reads, in one-letter code: Alcohol O-acetyltransferase 1 (525 aa).

Residues 24–41 (GHARRMGSVEDLYVALNR) are membrane association. Catalysis depends on charge relay system residues His191 and Asp195. A membrane association region spans residues 508-525 (QESLEELCSIYKALLLGP).

It belongs to the ATF1 alcohol acetyltransferase family.

The protein localises to the lipid droplet. The protein resides in the endoplasmic reticulum membrane. It catalyses the reaction an aliphatic alcohol + acetyl-CoA = an acetyl ester + CoA. The enzyme catalyses a fatty acyl-CoA + H2O = a fatty acid + CoA + H(+). It carries out the reaction 3-methylbutanol + acetyl-CoA = 3-methylbutyl acetate + CoA. With respect to regulation, found to be inhibited by cadmium, copper, zinc and mercurium divalent cations and sulfhydryl reagents. Inhibited by the addition of unsaturated fatty acids to the culture. Functionally, major alcohol O-acetyltransferase that uses acetyl-CoA to synthesize acetate esters from various alcohols, producing ethyl acetate, isoamyl acetate, isobutyl acetate, butyl acetate, hexyl acetate, heptyl acetate and octyl acetate. The alcohol acyltransferase activity is promiscuous with regard to alcohol but relatively specific for acetyl-CoA since ATF1 does not use any other acyl-CoAs (C3, C4, C5, C6, C8, C10, C12). Acts also as an efficient thioesterase in vitro with specificity towards medium-chain-length acyl-CoAs. In natural environments, the production of aromatic volatile metabolites promotes dispersal through insect vectors. In Saccharomyces cerevisiae (strain ATCC 204508 / S288c) (Baker's yeast), this protein is Alcohol O-acetyltransferase 1.